Reading from the N-terminus, the 483-residue chain is Glycogen synthase (483 aa).

Lys18 contacts ADP-alpha-D-glucose.

The protein belongs to the glycosyltransferase 1 family. Bacterial/plant glycogen synthase subfamily.

The enzyme catalyses [(1-&gt;4)-alpha-D-glucosyl](n) + ADP-alpha-D-glucose = [(1-&gt;4)-alpha-D-glucosyl](n+1) + ADP + H(+). Its pathway is glycan biosynthesis; glycogen biosynthesis. In terms of biological role, synthesizes alpha-1,4-glucan chains using ADP-glucose. In Methylocella silvestris (strain DSM 15510 / CIP 108128 / LMG 27833 / NCIMB 13906 / BL2), this protein is Glycogen synthase.